Consider the following 142-residue polypeptide: HTH-type transcriptional regulator LrpA1 (142 aa).

Positions 1–72 constitute an HTH asnC-type domain; that stretch reads MSTESTEERI…GQSIAMVGID (72 aa). The segment at residues 22-41 is a DNA-binding region (H-T-H motif); that stretch reads YAAIAERADVSKPTVRKYID.

Functionally, transcription factor that regulates genes involved in amino acid metabolism. Represses the aspB3 gene, coding for an aspartate transaminase, in the presence of L-aspartate. Another target gene is the basal transcriptional regulator tfbB. Also binds its own promoter. This is HTH-type transcriptional regulator LrpA1 (lrpA1) from Halobacterium salinarum (strain ATCC 29341 / DSM 671 / R1).